A 521-amino-acid polypeptide reads, in one-letter code: MSSRPFESPPPYRPDEFKPNHYAPSNDVYGGDMHVRPMLSQPAYSFYPEDEILHFYKWTSPPGVIRILSMLVIVMCIAIFGCVASTLAWDRGYGTGLMGGSIGYPYGSGFGSYGTGYGYGFGYGYGYGGYTDPRAAKGFLLAMVAFCFIAALVIFVTSVIRSDISRTRRYYLTVIILSAFLGVMMFIATIVYIMGVNPTAQASGSLYSSQIYAMCNQFYASTATGLYMDQYLYHYCVVDPQEAIAIVLGFMVIVAFALIIFFAVKTRRKMDRYDKSNILWDKEHIYDEQPPNVEEWVKNVSAGTQDMPPPPSDYVERVDSPMAYSSNGKVNDKRLYPESSYKSTPVPEVVQELPATSPADDFRQPRYSSSGHLEPPSKRAPSKGRTGRPKRLEQDHYETDYTTGGESCDELEEDWIREYPPITSDQQRQLYKRNFDTGLQEYKSLQAELDEINKELSRLDKELDDYREESEEYMAAADEYNRLKQVKGSPDYKNKRNYCKQLKSKLSHIKKMVGDYDRQKT.

Residues 1–66 (MSSRPFESPP…KWTSPPGVIR (66 aa)) are Cytoplasmic-facing. The 209-residue stretch at 60 to 268 (SPPGVIRILS…IIFFAVKTRR (209 aa)) folds into the MARVEL domain. Residues 67–89 (ILSMLVIVMCIAIFGCVASTLAW) form a helical membrane-spanning segment. Residues 90-134 (DRGYGTGLMGGSIGYPYGSGFGSYGTGYGYGFGYGYGYGGYTDPR) lie on the Extracellular side of the membrane. The helical transmembrane segment at 135–159 (AAKGFLLAMVAFCFIAALVIFVTSV) threads the bilayer. At 160–169 (IRSDISRTRR) the chain is on the cytoplasmic side. A helical membrane pass occupies residues 170 to 194 (YYLTVIILSAFLGVMMFIATIVYIM). At 195 to 242 (GVNPTAQASGSLYSSQIYAMCNQFYASTATGLYMDQYLYHYCVVDPQE) the chain is on the extracellular side. A disulfide bridge connects residues C215 and C236. Residues 243-264 (AIAIVLGFMVIVAFALIIFFAV) traverse the membrane as a helical segment. Residues 265–521 (KTRRKMDRYD…MVGDYDRQKT (257 aa)) lie on the Cytoplasmic side of the membrane. Residue S301 is modified to Phosphoserine. Residues 301–407 (SAGTQDMPPP…ETDYTTGGES (107 aa)) form a disordered region. The residue at position 304 (T304) is a Phosphothreonine. Phosphoserine is present on residues S312, S320, and S339. Position 367 is a phosphotyrosine (Y367). Residues S368 and S369 each carry the phosphoserine modification. The span at 380–389 (APSKGRTGRP) shows a compositional bias: basic residues. The span at 390-399 (KRLEQDHYET) shows a compositional bias: basic and acidic residues. Phosphotyrosine occurs at positions 397 and 401. A phosphothreonine; by PKC/PRKCH mark is found at T402 and T403. S407 is modified (phosphoserine). The OCEL domain occupies 413 to 521 (EDWIREYPPI…MVGDYDRQKT (109 aa)). The stretch at 424 to 488 (SDQQRQLYKR…EYNRLKQVKG (65 aa)) forms a coiled coil. Phosphoserine is present on S489.

Belongs to the ELL/occludin family. In terms of assembly, interacts with TJP1/ZO1. Interacts with VAPA. Interacts with CLDN1, CLDN6, CLDN9, CLDN11, CLDN12 and CLDN17. Interacts with PLSCR1. Interacts with LSR, ILDR1 and ILDR2. Interacts with TJP2/ZO2. In terms of processing, dephosphorylated by PTPRJ. Less-phosphorylated forms are found in basolateral membrane, cytosol and tight junction. More-heavily phosphorylated forms are concentrated exclusively in tight junction. Localized at tight junctions of both epithelial and endothelial cells.

Its subcellular location is the cell membrane. It localises to the cell junction. It is found in the tight junction. Its function is as follows. May play a role in the formation and regulation of the tight junction (TJ) paracellular permeability barrier. Interacts with ZO-1. The protein is Occludin (OCLN) of Canis lupus familiaris (Dog).